A 612-amino-acid polypeptide reads, in one-letter code: Sorting nexin MVP1 (612 aa).

Positions 35-68 are disordered; the sequence is SSAPSPAGSVTPARATASASEGRNIAANGNKEEG. The 109-residue stretch at 226–334 folds into the PX domain; sequence WKDQERIVVT…NIFLTSSSFE (109 aa). R263, S265, K289, and R301 together coordinate a 1,2-diacyl-sn-glycero-3-phospho-(1D-myo-inositol-3-phosphate).

It belongs to the sorting nexin family.

The protein resides in the cytoplasm. It is found in the membrane. Its function is as follows. Required for vacuolar protein sorting. The polypeptide is Sorting nexin MVP1 (MVP1) (Cryptococcus neoformans var. neoformans serotype D (strain B-3501A) (Filobasidiella neoformans)).